The chain runs to 400 residues: Phosphoglycerate kinase (400 aa).

Residues 23 to 25, R38, 61 to 64, R120, and R153 each bind substrate; these read DLN and HFGR. Residues K203, E325, and 355–358 contribute to the ATP site; that span reads GGDT.

Belongs to the phosphoglycerate kinase family. Monomer.

Its subcellular location is the cytoplasm. The enzyme catalyses (2R)-3-phosphoglycerate + ATP = (2R)-3-phospho-glyceroyl phosphate + ADP. The protein operates within carbohydrate degradation; glycolysis; pyruvate from D-glyceraldehyde 3-phosphate: step 2/5. In Methylorubrum extorquens (strain PA1) (Methylobacterium extorquens), this protein is Phosphoglycerate kinase.